We begin with the raw amino-acid sequence, 85 residues long: Conotoxin Mi15b (85 aa).

An N-terminal signal peptide occupies residues 1-23 (MEKLTVLILVAIVLLTIQVLGQS). Residues 24 to 49 (DRDKHPKRRPRQYATKRLSALMKGHR) constitute a propeptide that is removed on maturation. Gln-50 carries the post-translational modification Pyrrolidone carboxylic acid.

Belongs to the conotoxin O2 superfamily. Contains 4 disulfide bonds. Expressed by the venom duct.

The protein resides in the secreted. The chain is Conotoxin Mi15b from Conus miles (Soldier cone).